A 1622-amino-acid polypeptide reads, in one-letter code: FK506-binding protein 5 (1622 aa).

In terms of domain architecture, PPIase FKBP-type spans 178 to 269 (GDRVSIKYAG…IFDLEVTGSK (92 aa)). The tract at residues 268–306 (SKKKEGSEPSLPSLNGQPSNAPQQSLPTQLFDNSPVPQD) is disordered. Over residues 277–303 (SLPSLNGQPSNAPQQSLPTQLFDNSPV) the composition is skewed to polar residues. At R314 the chain carries Omega-N-methylarginine. Disordered regions lie at residues 320 to 432 (RATG…GFNN) and 518 to 538 (SPPPPVQQAPPPTPAPAPPPP). Residues 335-432 (ESNSRNSHSN…NMNNNNGFNN (98 aa)) show a composition bias toward low complexity. Coiled coils occupy residues 607 to 827 (LVQT…ETER) and 854 to 961 (KKEE…LESQ). Disordered regions lie at residues 1043 to 1097 (KQQQ…EVVV) and 1122 to 1622 (EEVK…VLPL). 2 stretches are compositionally biased toward acidic residues: residues 1050 to 1093 (KEEE…EEEK) and 1152 to 1168 (DDEDDDDDEDDYDDINE). The segment covering 1169–1182 (EDLKNIDAEIEKMQ) has biased composition (basic and acidic residues). Composition is skewed to acidic residues over residues 1185–1199 (MGDELEDDDDEEEEK) and 1222–1260 (ESEEEEEEETKVEVPVLEEEKEEEETKVEVPVLEDEQED). The span at 1261–1271 (KVESDVEEKIV) shows a compositional bias: basic and acidic residues. The segment covering 1320-1335 (DDDEDNEKDVASDSEE) has biased composition (acidic residues). The span at 1353 to 1369 (EEKVVEQVKEEINETKF) shows a compositional bias: basic and acidic residues. The segment covering 1380–1412 (TTTEEKEEEKEEEKVEEEEEKVVEPPTIDDDET) has biased composition (acidic residues). Low complexity-rich tracts occupy residues 1435–1449 (STTAATTSTTTTSST) and 1465–1504 (KTSFFDFDDSPFSAETETETKSTAASSDPFADTTSSTPTS). Composition is skewed to polar residues over residues 1519–1532 (FGNSSDIFDKPSTT) and 1581–1609 (AKSNNNTPSRQKQDFSSLFGSDPTISPLT).

It belongs to the FKBP-type PPIase family.

It carries out the reaction [protein]-peptidylproline (omega=180) = [protein]-peptidylproline (omega=0). Inhibited by both FK506 and rapamycin. PPIases accelerate the folding of proteins by catalyzing the cis-trans isomerization of proline imidic peptide bonds in oligopeptides. The polypeptide is FK506-binding protein 5 (fkbp5) (Dictyostelium discoideum (Social amoeba)).